The sequence spans 193 residues: Ion-translocating oxidoreductase complex subunit A (193 aa).

6 helical membrane passes run 5 to 25, 39 to 59, 63 to 83, 102 to 122, 134 to 154, and 171 to 191; these read LLLFVGTVLVNNFVLVKFLGL, MGMGLATTFVMTLTSICAWLI, ILIPLNLIYLRTLAFILVIAV, LLGIFLPLITTNCAVLGVALL, ALYGFSAAVGFSLVMVLFAAI, and AIALITAGLMSLAFMGFSGLV.

This sequence belongs to the NqrDE/RnfAE family. As to quaternary structure, the complex is composed of six subunits: RsxA, RsxB, RsxC, RsxD, RsxE and RsxG.

The protein localises to the cell inner membrane. In terms of biological role, part of a membrane-bound complex that couples electron transfer with translocation of ions across the membrane. Required to maintain the reduced state of SoxR. In Shigella flexneri serotype 5b (strain 8401), this protein is Ion-translocating oxidoreductase complex subunit A.